The chain runs to 74 residues: Hadrucalcin (74 aa).

The first 27 residues, 1 to 27, serve as a signal peptide directing secretion; that stretch reads MKTSSLTIIFIAVIITIICLNIHDIEA. The propeptide occupies 28–39; that stretch reads REIEFNAGRVVR. 3 cysteine pairs are disulfide-bonded: C44/C58, C51/C62, and C57/C73. Residues 64–65 form an essential for stimulation of [3H]ryanodine binding to RYR1 region; that stretch reads RR.

In terms of tissue distribution, expressed by the venom gland.

Its subcellular location is the secreted. In terms of biological role, this toxin activates ryanodine receptors RyR1 and RyR2 by inducing a long-lasting subconductance state (35% of the full conductance stateon RyR1). Furthermore, it triggers calcium release from sarcoplasmic vesicles (11.8 nM are enough to induce a sharp release on RyR1, and 55% of the total calcium is released after toxin (100 nM) addition on RyR1) probably by acting as a cell-penetrating peptide (CPP). In addition, it has been shown to dose-dependently stimulate ryanodine binding to RyR1 (EC(50)=14.8 nM). It also augments the bell-shaped calcium-[3H]ryanodine binding curve that is maximal at about 10 uM calcium concentration. It binds a different site as ryanodine. It acts synergistically with caffeine. In vivo, intracerebroventricular injection into mice induces neurotoxic symptoms, followed by death. The protein is Hadrucalcin of Hoffmannihadrurus gertschi (Scorpion).